Consider the following 204-residue polypeptide: NAD(P)H dehydrogenase (quinone) (204 aa).

One can recognise a Flavodoxin-like domain in the interval 4-195 (IQIVFYSMYG…AIARFQGAHV (192 aa)). FMN is bound by residues 10 to 15 (SMYGHI) and 83 to 85 (TRF). Y12 serves as a coordination point for NAD(+). A substrate-binding site is contributed by W103. FMN-binding positions include 118–124 (STATQHG) and H139.

It belongs to the WrbA family. Requires FMN as cofactor.

The enzyme catalyses a quinone + NADH + H(+) = a quinol + NAD(+). It carries out the reaction a quinone + NADPH + H(+) = a quinol + NADP(+). The chain is NAD(P)H dehydrogenase (quinone) from Trichlorobacter lovleyi (strain ATCC BAA-1151 / DSM 17278 / SZ) (Geobacter lovleyi).